The following is an 832-amino-acid chain: Subtilisin-like protease SBT2.4 (832 aa).

The N-terminal stretch at 1-27 is a signal peptide; sequence METNPRKLRSYSYICLIVCIFVLVVCA. In terms of domain architecture, Inhibitor I9 spans 74–138; sequence EAKKIEEIHD…VEEDKGVKLM (65 aa). A Peptidase S8 domain is found at 150-690; it reads QQVWQKISNE…AGHVNPARAL (541 aa). Asp174 serves as the catalytic Charge relay system. Residues Asn196 and Asn238 are each glycosylated (N-linked (GlcNAc...) asparagine). The Charge relay system role is filled by His252. The 100-residue stretch at 425 to 524 folds into the PA domain; the sequence is TNGSVLQPLT…SAAQIILRYY (100 aa). N-linked (GlcNAc...) asparagine glycosylation is present at Asn426. The active-site Charge relay system is the Ser618. N-linked (GlcNAc...) asparagine glycans are attached at residues Asn761, Asn774, and Asn800.

It belongs to the peptidase S8 family.

The protein localises to the secreted. In terms of biological role, serine protease required for epidermal surface formation in embryos and juvenile plants. Involved in embryonic cuticle formation downstream of BHLH95/ZOU. In Arabidopsis thaliana (Mouse-ear cress), this protein is Subtilisin-like protease SBT2.4.